A 350-amino-acid polypeptide reads, in one-letter code: Quercetin 2,3-dioxygenase (350 aa).

A cupin 1 region spans residues 1–145; sequence DTSSLIVEDA…FYYLGTNATD (145 aa). Cu cation contacts are provided by His66, His68, and Glu73. Position 66 (His66) interacts with substrate. Glu73 lines the substrate pocket. Residues Asn90 and Asn109 are each glycosylated (N-linked (GlcNAc...) asparagine). His112 serves as a coordination point for Cu cation. Residue Asn142 is glycosylated (N-linked (GlcNAc...) asparagine). Residues 146–205 are linker; the sequence is TTHTPYIPSSSDSSSTTGPDSSTISTLQSFDVYAELSFTPRTDTVNGTAPANTVWHTGAN. The disordered stretch occupies residues 148 to 167; that stretch reads HTPYIPSSSDSSSTTGPDSS. Residues 152–167 show a composition bias toward low complexity; it reads IPSSSDSSSTTGPDSS. 2 N-linked (GlcNAc...) asparagine glycosylation sites follow: Asn191 and Asn248. The interval 206-350 is cupin 2; it reads ALASTAGDPY…WSSVSFPADW (145 aa).

As to quaternary structure, homodimer. The cofactor is Cu cation. In terms of processing, the N-linked glycan at Asn-191 consists of Man(5)-GlcNAc(2).

It catalyses the reaction quercetin + O2 = 2-(3,4-dihydroxybenzoyloxy)-4,6-dihydroxybenzoate + CO. It functions in the pathway flavonoid metabolism; quercetin degradation. Inhibited by diethyldithiocarbamate and kojic acid. Functionally, performs the first step in the degradation of the flavonoid quercetin by a dioxygenase reaction. The enzyme catalyzes the cleavage of the O-heteroaromatic ring of the flavonol quercetin yielding the depside 2-protocatechuoyl-phloroglucinol carboxylic acid and carbon monoxide. This involves the remarkable dioxygenolytic cleavage of two carbon-carbon bonds. This is Quercetin 2,3-dioxygenase from Aspergillus japonicus.